The chain runs to 118 residues: Small ribosomal subunit protein bS6 (118 aa).

The interval 98–118 is disordered; the sequence is TAAPAAKVAPVETAPAAEAAE. Residues 99 to 118 show a composition bias toward low complexity; the sequence is AAPAAKVAPVETAPAAEAAE.

This sequence belongs to the bacterial ribosomal protein bS6 family.

Binds together with bS18 to 16S ribosomal RNA. This Geobacter metallireducens (strain ATCC 53774 / DSM 7210 / GS-15) protein is Small ribosomal subunit protein bS6.